A 306-amino-acid polypeptide reads, in one-letter code: D-glucosamine-6-phosphate 4-epimerase (306 aa).

In terms of domain architecture, SIS spans 19–153 (DIPGVKTAEK…TGSNYRVQDL (135 aa)). Catalysis depends on glutamate 200, which acts as the Proton acceptor. Histidine 216 functions as the Proton donor in the catalytic mechanism. Arginine 296 acts as the Proton acceptor in catalysis.

It belongs to the PGI/PMI family.

It catalyses the reaction D-glucosamine 6-phosphate = D-galactosamine 6-phosphate. Its function is as follows. Involved in the synthesis of UDP-N-acetylgalactosamine (UDP-GalNAc). Catalyzes the conversion of glucosamine-6-phosphate (GlcN-6-P) to galactosamine-6-phosphate (GalN-6-P). The polypeptide is D-glucosamine-6-phosphate 4-epimerase (Sulfolobus acidocaldarius (strain ATCC 33909 / DSM 639 / JCM 8929 / NBRC 15157 / NCIMB 11770)).